Here is a 495-residue protein sequence, read N- to C-terminus: 3-octaprenyl-4-hydroxybenzoate carboxy-lyase (495 aa).

Asparagine 172 is a Mn(2+) binding site. Residues 175 to 177, 189 to 191, and 194 to 195 contribute to the prenylated FMN site; these read IYR, RWL, and RG. Mn(2+) is bound at residue glutamate 238. Catalysis depends on aspartate 287, which acts as the Proton donor.

It belongs to the UbiD family. As to quaternary structure, homohexamer. It depends on prenylated FMN as a cofactor. Mn(2+) is required as a cofactor.

It is found in the cell membrane. It catalyses the reaction a 4-hydroxy-3-(all-trans-polyprenyl)benzoate + H(+) = a 2-(all-trans-polyprenyl)phenol + CO2. It participates in cofactor biosynthesis; ubiquinone biosynthesis. Its function is as follows. Catalyzes the decarboxylation of 3-octaprenyl-4-hydroxy benzoate to 2-octaprenylphenol, an intermediate step in ubiquinone biosynthesis. This is 3-octaprenyl-4-hydroxybenzoate carboxy-lyase from Yersinia pestis bv. Antiqua (strain Angola).